Here is a 360-residue protein sequence, read N- to C-terminus: Protein pelota homolog (360 aa).

Belongs to the eukaryotic release factor 1 family. Pelota subfamily. As to quaternary structure, monomer. A divalent metal cation is required as a cofactor.

It localises to the cytoplasm. Its function is as follows. May function in recognizing stalled ribosomes, interact with stem-loop structures in stalled mRNA molecules, and effect endonucleolytic cleavage of the mRNA. May play a role in the release non-functional ribosomes and degradation of damaged mRNAs. Has endoribonuclease activity. In Hyperthermus butylicus (strain DSM 5456 / JCM 9403 / PLM1-5), this protein is Protein pelota homolog.